A 564-amino-acid chain; its full sequence is Ovochymase-2 (564 aa).

Positions 1–22 (MLISRNKLILLLGIVFFERGKS) are cleaved as a signal peptide. A propeptide spans 23-51 (ATLSLPKAPSCGQSLVKVQPWNYFNIFSR) (activation peptide). The 248-residue stretch at 52–299 (ILGGSQVEKG…VLPWIHEHIQ (248 aa)) folds into the Peptidase S1 domain. An intrachain disulfide couples Cys-77 to Cys-93. The Charge relay system role is filled by His-92. N-linked (GlcNAc...) asparagine glycosylation is present at Asn-104. Residue Glu-119 participates in Ca(2+) binding. Asp-142 serves as the catalytic Charge relay system. Disulfide bonds link Cys-176–Cys-246, Cys-207–Cys-225, Cys-236–Cys-265, Cys-311–Cys-341, and Cys-365–Cys-384. Residue Ser-240 is the Charge relay system of the active site. 2 CUB domains span residues 311–421 (CSEQ…YKAL) and 431–543 (CSYL…VSFI). Asn-415 and Asn-451 each carry an N-linked (GlcNAc...) asparagine glycan. 2 disulfide bridges follow: Cys-431/Cys-458 and Cys-485/Cys-506. Residue Asn-530 is glycosylated (N-linked (GlcNAc...) asparagine).

The protein belongs to the peptidase S1 family.

Its subcellular location is the secreted. Its function is as follows. May be required for sperm ADAM3 processing and consequential sperm fertilizing ability. In vitro, has an endopeptidase activity. The sequence is that of Ovochymase-2 from Homo sapiens (Human).